Reading from the N-terminus, the 206-residue chain is Pyridoxal 5'-phosphate synthase subunit PdxT (206 aa).

59–61 (GES) is a binding site for L-glutamine. Cys-91 functions as the Nucleophile in the catalytic mechanism. L-glutamine is bound by residues Arg-123 and 151 to 152 (IR). Active-site charge relay system residues include His-187 and Glu-189.

Belongs to the glutaminase PdxT/SNO family. In terms of assembly, in the presence of PdxS, forms a dodecamer of heterodimers. Only shows activity in the heterodimer.

The enzyme catalyses aldehydo-D-ribose 5-phosphate + D-glyceraldehyde 3-phosphate + L-glutamine = pyridoxal 5'-phosphate + L-glutamate + phosphate + 3 H2O + H(+). The catalysed reaction is L-glutamine + H2O = L-glutamate + NH4(+). It functions in the pathway cofactor biosynthesis; pyridoxal 5'-phosphate biosynthesis. Catalyzes the hydrolysis of glutamine to glutamate and ammonia as part of the biosynthesis of pyridoxal 5'-phosphate. The resulting ammonia molecule is channeled to the active site of PdxS. The polypeptide is Pyridoxal 5'-phosphate synthase subunit PdxT (Mycobacterium sp. (strain KMS)).